A 141-amino-acid polypeptide reads, in one-letter code: Large ribosomal subunit protein uL11 (141 aa).

Belongs to the universal ribosomal protein uL11 family. Part of the ribosomal stalk of the 50S ribosomal subunit. Interacts with L10 and the large rRNA to form the base of the stalk. L10 forms an elongated spine to which L12 dimers bind in a sequential fashion forming a multimeric L10(L12)X complex. Post-translationally, one or more lysine residues are methylated.

Forms part of the ribosomal stalk which helps the ribosome interact with GTP-bound translation factors. This chain is Large ribosomal subunit protein uL11, found in Opitutus terrae (strain DSM 11246 / JCM 15787 / PB90-1).